The chain runs to 718 residues: SANT and BTB domain regulator of class switch recombination (718 aa).

Residues 21 to 59 (DMILYPLIGIPQTINWETIARLVPGLTPKECAKRFDELK) form the SANT domain. A compositionally biased stretch (polar residues) spans 118–134 (ASTRNCSSESENCTTHN). The tract at residues 118–142 (ASTRNCSSESENCTTHNGGEMTEES) is disordered. The region spanning 147–255 (MVIHVCDEAK…QCIQYCHKNM (109 aa)) is the BTB domain. Acidic residues predominate over residues 555-576 (SEEEEYTTGSEVTEDEVGDEEE). 2 disordered regions span residues 555–622 (SEEE…SPFV) and 692–718 (SVPVSARQSSSEKNTRSKSRFGQGRPA). The span at 580–595 (KQRKKEKPKKFTRQPK) shows a compositional bias: basic residues. Residues 604-615 (QRKEKALEKSAS) show a composition bias toward basic and acidic residues.

This sequence belongs to the KIAA1841 family. Homodimer. Interacts (via the BTB domain) with HDAC1 and NCOR2.

Functionally, negatively regulates class switch recombination or isotype switching in splenic B-cells. This chain is SANT and BTB domain regulator of class switch recombination, found in Homo sapiens (Human).